The primary structure comprises 98 residues: Class II hydrophobin 2 (98 aa).

The first 21 residues, 1–21 (MFFSRISTIVSMTALFASALA), serve as a signal peptide directing secretion. 4 disulfide bridges follow: cysteine 34–cysteine 80, cysteine 41–cysteine 71, cysteine 42–cysteine 54, and cysteine 81–cysteine 92.

This sequence belongs to the cerato-ulmin hydrophobin family.

Its subcellular location is the secreted. The protein resides in the cell wall. In terms of biological role, aerial growth, conidiation, and dispersal of filamentous fungi in the environment rely upon a capability of their secreting small amphipathic proteins called hydrophobins (HPBs) with low sequence identity. Class I can self-assemble into an outermost layer of rodlet bundles on aerial cell surfaces, conferring cellular hydrophobicity that supports fungal growth, development and dispersal; whereas Class II form highly ordered films at water-air interfaces through intermolecular interactions but contribute nothing to the rodlet structure. In Botryotinia fuckeliana, hydrophobins are not involved in conferring surface hydrophobicity to conidia and aerial hyphae and their function in sclerotia and fruiting bodies remains to be investigated. The sequence is that of Class II hydrophobin 2 from Botryotinia fuckeliana (strain B05.10) (Noble rot fungus).